The following is a 1577-amino-acid chain: MAP kinase-activating death domain protein (1577 aa).

The uDENN domain maps to 13-267; the sequence is YLVIVGARHP…VPVSGQKRVD (255 aa). Basic and acidic residues predominate over residues 106–121; sequence KEKVEGGAGPRGKEGA. The interval 106 to 166 is disordered; sequence KEKVEGGAGP…WGKRRAKAGS (61 aa). The segment covering 123–140 has biased composition (low complexity); sequence TSGASEEAATGSSESGST. The segment covering 141-156 has biased composition (polar residues); it reads LQPPSADSTPDINQSP. At Ser-155 the chain carries Phosphoserine. Residues 288–428 enclose the cDENN domain; that stretch reads RFTLVDFPLH…ESLELKKHLK (141 aa). A dDENN domain is found at 430 to 564; that stretch reads ALASMSLNTQ…LNPSNYAFQR (135 aa). Disordered stretches follow at residues 604–635 and 676–840; these read LSVP…SSYS and QPQK…NSTE. Positions 614 to 629 are enriched in acidic residues; it reads SDPTEDSGSDSQDYDD. Phosphoserine is present on residues Ser-688 and Ser-691. A compositionally biased stretch (polar residues) spans 688 to 698; the sequence is SENSQENPPLR. Low complexity predominate over residues 699-715; sequence SSSSTTASSSPSTVVHS. The segment covering 793-803 has biased composition (polar residues); the sequence is PRFSQHVSGSR. Ser-812, Ser-817, and Ser-819 each carry phosphoserine. Residues 826 to 839 show a composition bias toward low complexity; the sequence is RASSPNSTVSNNST. Residues Ser-857, Ser-861, Ser-915, Ser-920, Ser-929, and Ser-1058 each carry the phosphoserine modification. Disordered regions lie at residues 912–940, 1050–1109, and 1127–1272; these read QKSS…SSEN, KEPD…DTRS, and EVKK…RSSE. The segment covering 928 to 938 has biased composition (low complexity); it reads SSPQGRSSNSS. Phosphothreonine is present on residues Thr-1060 and Thr-1065. Ser-1109 bears the Phosphoserine mark. The segment covering 1127–1141 has biased composition (basic and acidic residues); it reads EVKKQKALEKQRPEG. The segment covering 1157–1172 has biased composition (polar residues); the sequence is QMSADSGVSLTSASQR. A compositionally biased stretch (low complexity) spans 1189–1203; the sequence is SSSQDSEVSTVSNSS. Over residues 1232–1248 the composition is skewed to polar residues; that stretch reads SRATLSDSEIETNSATS. At Thr-1235 the chain carries Phosphothreonine. Phosphoserine is present on residues Ser-1237 and Ser-1266. In terms of domain architecture, Death spans 1336-1411; that stretch reads GMDQGPQEMI…GLVYSQQVNE (76 aa).

This sequence belongs to the MADD family. In terms of assembly, interacts (via death domain) with TNFRSF1A (via death domain). Interacts with PIDD1. Interacts with YWHAZ. Interacts (via death domain) with KIF1B; links the motor KIF1B to Rab3-carrying vesicles in anterograde synaptic vesicle transport. Interacts with KIF1A. Interacts (via uDENN domain) with RAB3A, RAB3B, RAB3C and RAB3D; the GTP-bound form of the Rab proteins is preferred for interaction. As to expression, expressed in the brain.

The protein resides in the cell membrane. Its subcellular location is the cytoplasm. It localises to the cell projection. The protein localises to the axon. Functionally, guanyl-nucleotide exchange factor that regulates small GTPases of the Rab family. Converts GDP-bound inactive form of RAB27A and RAB27B to the GTP-bound active forms. Converts GDP-bound inactive form of RAB3A, RAB3C and RAB3D to the GTP-bound active forms, GTPases involved in synaptic vesicle exocytosis and vesicle secretion. Plays a role in synaptic vesicle formation and in vesicle trafficking at the neuromuscular junction. Involved in up-regulating a post-docking step of synaptic exocytosis in central synapses. Probably by binding to the motor proteins KIF1B and KIF1A, mediates motor-dependent transport of GTP-RAB3A-positive vesicles to the presynaptic nerve terminals. Plays a role in TNFA-mediated activation of the MAPK pathway, including ERK1/2. May link TNFRSF1A with MAP kinase activation. May be involved in the regulation of TNFA-induced apoptosis. This is MAP kinase-activating death domain protein from Mus musculus (Mouse).